The following is a 173-amino-acid chain: NADH-ubiquinone oxidoreductase chain 6 (173 aa).

The next 4 helical transmembrane spans lie at 24–44 (AMGLMLLIQTFLTSLLTGMFV), 47–67 (FWFSYVLFLIFMGGMLVLFIY), 81–101 (MKLFFLSLSMILMFIVFSFFF), and 142–162 (LITLLLINYLFLTLLVTVKIT).

The protein belongs to the complex I subunit 6 family.

It localises to the mitochondrion membrane. The enzyme catalyses a ubiquinone + NADH + 5 H(+)(in) = a ubiquinol + NAD(+) + 4 H(+)(out). Core subunit of the mitochondrial membrane respiratory chain NADH dehydrogenase (Complex I) that is believed to belong to the minimal assembly required for catalysis. Complex I functions in the transfer of electrons from NADH to the respiratory chain. The immediate electron acceptor for the enzyme is believed to be ubiquinone. This is NADH-ubiquinone oxidoreductase chain 6 from Aedes aegypti (Yellowfever mosquito).